A 310-amino-acid chain; its full sequence is Homoserine O-acetyltransferase (310 aa).

Cys-142 acts as the Acyl-thioester intermediate in catalysis. Substrate-binding residues include Lys-163 and Ser-192. Residue His-235 is the Proton acceptor of the active site. The active site involves Glu-237. Arg-249 is a binding site for substrate.

It belongs to the MetA family.

It localises to the cytoplasm. The enzyme catalyses L-homoserine + acetyl-CoA = O-acetyl-L-homoserine + CoA. It participates in amino-acid biosynthesis; L-methionine biosynthesis via de novo pathway; O-acetyl-L-homoserine from L-homoserine: step 1/1. Its function is as follows. Transfers an acetyl group from acetyl-CoA to L-homoserine, forming acetyl-L-homoserine. The protein is Homoserine O-acetyltransferase of Lachnospira eligens (strain ATCC 27750 / DSM 3376 / VPI C15-48 / C15-B4) (Eubacterium eligens).